A 250-amino-acid polypeptide reads, in one-letter code: tRNA (guanine-N(1)-)-methyltransferase (250 aa).

S-adenosyl-L-methionine is bound by residues Gly-108 and 127-132; that span reads LGDFVL.

The protein belongs to the RNA methyltransferase TrmD family. As to quaternary structure, homodimer.

It is found in the cytoplasm. The catalysed reaction is guanosine(37) in tRNA + S-adenosyl-L-methionine = N(1)-methylguanosine(37) in tRNA + S-adenosyl-L-homocysteine + H(+). In terms of biological role, specifically methylates guanosine-37 in various tRNAs. This is tRNA (guanine-N(1)-)-methyltransferase from Streptococcus agalactiae serotype Ia (strain ATCC 27591 / A909 / CDC SS700).